The following is a 145-amino-acid chain: Late embryogenesis abundant protein D-11 (145 aa).

Residues 1 to 18 (MAHFQNQYSAPEVTQTDA) show a composition bias toward polar residues. The tract at residues 1-136 (MAHFQNQYSA…EAPWSPQPLI (136 aa)) is disordered. A compositionally biased stretch (basic residues) spans 47–57 (GHHHGGHHGLH). The segment covering 58-68 (RTGSSSSSSSS) has biased composition (low complexity). The span at 82–96 (KERLKEKIPGNKEHQ) shows a compositional bias: basic and acidic residues. Residues 97–107 (SQATSTTTPGQ) show a composition bias toward polar residues.

This sequence belongs to the plant dehydrin family.

In terms of biological role, LEA protein are late embryogenesis abundant in higher plant seed embryos. There are two subsets of LEA proteins (5a, and 5b), the first ones are expressed when the cotyledon weight reach 80 mg and the second set are expressed above 100 mg. The function of those proteins is not known. The chain is Late embryogenesis abundant protein D-11 from Gossypium hirsutum (Upland cotton).